We begin with the raw amino-acid sequence, 227 residues long: Probable methylthioribulose-1-phosphate dehydratase (227 aa).

Residue C87 coordinates substrate. The Zn(2+) site is built by H105 and H107. Catalysis depends on E129, which acts as the Proton donor/acceptor. A Zn(2+)-binding site is contributed by H185.

Belongs to the aldolase class II family. MtnB subfamily. Zn(2+) serves as cofactor.

The protein localises to the cytoplasm. It catalyses the reaction 5-(methylsulfanyl)-D-ribulose 1-phosphate = 5-methylsulfanyl-2,3-dioxopentyl phosphate + H2O. The protein operates within amino-acid biosynthesis; L-methionine biosynthesis via salvage pathway; L-methionine from S-methyl-5-thio-alpha-D-ribose 1-phosphate: step 2/6. In terms of biological role, catalyzes the dehydration of methylthioribulose-1-phosphate (MTRu-1-P) into 2,3-diketo-5-methylthiopentyl-1-phosphate (DK-MTP-1-P). This is Probable methylthioribulose-1-phosphate dehydratase from Drosophila erecta (Fruit fly).